Reading from the N-terminus, the 244-residue chain is Derlin-2.1 (244 aa).

Topologically, residues 1–21 (MAQAVEEWYKQMPIITRSYLT) are cytoplasmic. Residues 22–42 (AAVVTTVGCSLEIISPYNLYL) traverse the membrane as a helical segment. Topologically, residues 43-96 (NPTLVVKQYQFWRLVTNFLYFRKMDLDFLFHMFFLARYCKLLEENSFRGKTADF) are lumenal. The helical transmembrane segment at 97-117 (LYMLLFGATVLTGIVLIGGMI) threads the bilayer. The Cytoplasmic portion of the chain corresponds to 118–121 (PYLS). A helical membrane pass occupies residues 122–142 (VSFSKIIFLSNSLTFMMVYVW). Residues 143 to 152 (SKQNPYIHMS) lie on the Lumenal side of the membrane. Residues 153–173 (FLGLFTFTAAYLPWVLLGFSI) form a helical membrane-spanning segment. The Cytoplasmic portion of the chain corresponds to 174 to 244 (LVGASAWGDF…HAPFDEIHQD (71 aa)).

It belongs to the derlin family.

It is found in the endoplasmic reticulum membrane. In terms of biological role, may be involved in the degradation process of specific misfolded endoplasmic reticulum (ER) luminal proteins. The chain is Derlin-2.1 (DER2.1) from Arabidopsis thaliana (Mouse-ear cress).